The primary structure comprises 188 residues: MASWLPETLFETVGQGPPPSKDYYQLLVTRSQVIYRWWKISLRSEYRSTKPGEAKETHEDFLENSHLQGQTALIFGARILDYVINLCKGKFDFLERLSDDLLLNIISYLDLEDIARLCQTSHRFAKLCMSDKLWEQIVQSTCDTITPDVRALAEDTGWRQLFFTNKLQLQRQLRKRKQKYGNLREKQP.

The 47-residue stretch at 91-137 folds into the F-box domain; the sequence is FDFLERLSDDLLLNIISYLDLEDIARLCQTSHRFAKLCMSDKLWEQI.

Directly interacts with SKP1 and CUL1.

In terms of biological role, substrate-recognition component of the SCF (SKP1-CUL1-F-box protein)-type E3 ubiquitin ligase complex. The protein is F-box only protein 36 (FBXO36) of Pongo abelii (Sumatran orangutan).